Consider the following 326-residue polypeptide: Ribosomal large subunit pseudouridine synthase D (326 aa).

The 74-residue stretch at 18-91 (QRLDQALAEM…IPLDIVYEDE (74 aa)) folds into the S4 RNA-binding domain. Asp-139 is an active-site residue.

The protein belongs to the pseudouridine synthase RluA family.

Its subcellular location is the cytoplasm. The enzyme catalyses uridine(1911/1915/1917) in 23S rRNA = pseudouridine(1911/1915/1917) in 23S rRNA. Functionally, responsible for synthesis of pseudouridine from uracil at positions 1911, 1915 and 1917 in 23S ribosomal RNA. The chain is Ribosomal large subunit pseudouridine synthase D (rluD) from Escherichia coli O157:H7.